Reading from the N-terminus, the 241-residue chain is Methylthioribulose-1-phosphate dehydratase (241 aa).

Cys-102 contacts substrate. Zn(2+) is bound by residues His-120, His-122, and His-199.

This sequence belongs to the aldolase class II family. MtnB subfamily. Requires Zn(2+) as cofactor.

It is found in the cytoplasm. It carries out the reaction 5-(methylsulfanyl)-D-ribulose 1-phosphate = 5-methylsulfanyl-2,3-dioxopentyl phosphate + H2O. The protein operates within amino-acid biosynthesis; L-methionine biosynthesis via salvage pathway; L-methionine from S-methyl-5-thio-alpha-D-ribose 1-phosphate: step 2/6. Its function is as follows. Catalyzes the dehydration of methylthioribulose-1-phosphate (MTRu-1-P) into 2,3-diketo-5-methylthiopentyl-1-phosphate (DK-MTP-1-P). This is Methylthioribulose-1-phosphate dehydratase from Coprinopsis cinerea (strain Okayama-7 / 130 / ATCC MYA-4618 / FGSC 9003) (Inky cap fungus).